The following is a 662-amino-acid chain: MDSSTLSPLTTSTAAPLESYERIRNAADISVIVIYFLVVMAVGLWAMFSTNRGTVGGFFLAGRSMVWWPIGASLFASNIGSGHFVGLAGTGAASGIATGGFEWNALIMVVVLGWVFVPIYIRAGVVTMPEYLQKRFGGKRIQIYLSILSLLLYIFTKISADIFSGAIFIQLTLGLDIYVAIIILLVITGLYTITGGLAAVIYTDTLQTAIMMVGSVILTGFAFHEVGGYEAFTEKYMRAIPSQISYGNTSIPQKCYTPREDAFHIFRDAITGDIPWPGLVFGMSILTLWYWCTDQVIVQRCLSAKNLSHVKAGCILCGYLKVMPMFLIVMMGMVSRILYTDKVACVVPSECERYCGTRVGCTNIAFPTLVVELMPNGLRGLMLSVMMASLMSSLTSIFNSASTLFTMDIYTKIRKKASEKELMIAGRLFMLFLIGISIAWVPIVQSAQSGQLFDYIQSITSYLGPPIAAVFLLAIFWKRVNEPGAFWGLVLGFLIGISRMITEFAYGTGSCMEPSNCPTIICGVHYLYFAIILFVISIITVVVVSLFTKPIPDVHLYRLCWSLRNSKEERIDLDAGEEDIQEAPEEATDTEVPKKKKGFFRRAYDLFCGLDQDKGPKMTKEEEAAMKLKLTDTSEHPLWRTVVNINGVILLAVAVFCYAYFA.

Residues 1 to 24 lie on the Extracellular side of the membrane; the sequence is MDSSTLSPLTTSTAAPLESYERIR. Residues 25 to 47 traverse the membrane as a helical segment; it reads NAADISVIVIYFLVVMAVGLWAM. Topologically, residues 48–66 are cytoplasmic; the sequence is FSTNRGTVGGFFLAGRSMV. A helical transmembrane segment spans residues 67-90; that stretch reads WWPIGASLFASNIGSGHFVGLAGT. Topologically, residues 91-95 are extracellular; sequence GAASG. The chain crosses the membrane as a helical span at residues 96 to 117; it reads IATGGFEWNALIMVVVLGWVFV. Over 118–139 the chain is Cytoplasmic; that stretch reads PIYIRAGVVTMPEYLQKRFGGK. The helical transmembrane segment at 140–169 threads the bilayer; the sequence is RIQIYLSILSLLLYIFTKISADIFSGAIFI. At 170–176 the chain is on the extracellular side; the sequence is QLTLGLD. A helical membrane pass occupies residues 177 to 193; that stretch reads IYVAIIILLVITGLYTI. The Cytoplasmic segment spans residues 194–202; it reads TGGLAAVIY. The helical transmembrane segment at 203 to 221 threads the bilayer; the sequence is TDTLQTAIMMVGSVILTGF. The Extracellular portion of the chain corresponds to 222 to 275; it reads AFHEVGGYEAFTEKYMRAIPSQISYGNTSIPQKCYTPREDAFHIFRDAITGDIP. N248 is a glycosylation site (N-linked (GlcNAc...) asparagine). Disulfide bonds link C255/C511, C255/C608, C345/C351, C355/C361, and C517/C522. Residues 276–295 form a helical membrane-spanning segment; the sequence is WPGLVFGMSILTLWYWCTDQ. Over 296 to 309 the chain is Cytoplasmic; sequence VIVQRCLSAKNLSH. The helical transmembrane segment at 310–331 threads the bilayer; the sequence is VKAGCILCGYLKVMPMFLIVMM. At 332-375 the chain is on the extracellular side; that stretch reads GMVSRILYTDKVACVVPSECERYCGTRVGCTNIAFPTLVVELMP. A helical membrane pass occupies residues 376-406; the sequence is NGLRGLMLSVMMASLMSSLTSIFNSASTLFT. At 407 to 422 the chain is on the cytoplasmic side; sequence MDIYTKIRKKASEKEL. Residues 423-444 form a helical membrane-spanning segment; sequence MIAGRLFMLFLIGISIAWVPIV. Topologically, residues 445–451 are extracellular; it reads QSAQSGQ. Residues 452–477 traverse the membrane as a helical segment; it reads LFDYIQSITSYLGPPIAAVFLLAIFW. Q457 lines the D-glucose pocket. Over 478-481 the chain is Cytoplasmic; that stretch reads KRVN. The helical transmembrane segment at 482 to 504 threads the bilayer; that stretch reads EPGAFWGLVLGFLIGISRMITEF. Over 505 to 525 the chain is Extracellular; sequence AYGTGSCMEPSNCPTIICGVH. The chain crosses the membrane as a helical span at residues 526-547; that stretch reads YLYFAIILFVISIITVVVVSLF. The Cytoplasmic portion of the chain corresponds to 548 to 642; it reads TKPIPDVHLY…TSEHPLWRTV (95 aa). A helical membrane pass occupies residues 643-660; it reads VNINGVILLAVAVFCYAY. At 661–662 the chain is on the extracellular side; it reads FA.

This sequence belongs to the sodium:solute symporter (SSF) (TC 2.A.21) family. N-glycosylation is not necessary for the cotransporter function. Found predominantly in intestine, renal cortex and in outer renal medulla.

It is found in the apical cell membrane. It carries out the reaction D-glucose(out) + 2 Na(+)(out) = D-glucose(in) + 2 Na(+)(in). It catalyses the reaction D-galactose(out) + 2 Na(+)(out) = D-galactose(in) + 2 Na(+)(in). With respect to regulation, enhanced by the interaction with PDZK1IP1/MAP17; but unlike SLC5A2/SGLT2, PDZK1IP1 is not essential for SLC5A1 transporter activity. Possibly modulated by cholesterol binding. Electrogenic Na(+)-coupled sugar symporter that actively transports D-glucose or D-galactose at the plasma membrane, with a Na(+) to sugar coupling ratio of 2:1. Transporter activity is driven by a transmembrane Na(+) electrochemical gradient set by the Na(+)/K(+) pump. Has a primary role in the transport of dietary monosaccharides from enterocytes to blood. Responsible for the absorption of D-glucose or D-galactose across the apical brush-border membrane of enterocytes, whereas basolateral exit is provided by GLUT2. Additionally, functions as a D-glucose sensor in enteroendocrine cells, triggering the secretion of the incretins GCG and GIP that control food intake and energy homeostasis. Together with SGLT2, functions in reabsorption of D-glucose from glomerular filtrate, playing a nonredundant role in the S3 segment of the proximal tubules. Transports D-glucose into endometrial epithelial cells, controlling glycogen synthesis and nutritional support for the embryo as well as the decidual transformation of endometrium prior to conception. Acts as a water channel enabling passive water transport in response to the osmotic gradient created upon sugar and Na(+) uptake. Has high water conductivity comparable to aquaporins and therefore is expected to play an important role in transepithelial water permeability, especially in the small intestine. The protein is Sodium/glucose cotransporter 1 (SLC5A1) of Oryctolagus cuniculus (Rabbit).